Reading from the N-terminus, the 321-residue chain is uncharacterized protein (321 aa).

Positions 280–306 (NSDHINNENNTNSNNDDNSNNSNNNNE) are disordered. The span at 286-306 (NENNTNSNNDDNSNNSNNNNE) shows a compositional bias: low complexity.

This is an uncharacterized protein from Dictyostelium discoideum (Social amoeba).